The sequence spans 144 residues: Ribonuclease VapC37 (144 aa).

One can recognise a PINc domain in the interval 3–137 (IVDANVLLYA…DFGRFEGVRW (135 aa)). The Mg(2+) site is built by aspartate 5 and aspartate 90.

It belongs to the PINc/VapC protein family. Mg(2+) serves as cofactor.

It localises to the secreted. Probable toxic component of a type II toxin-antitoxin (TA) system. An RNase. Upon expression in M.smegmatis inhibits colony formation. The putative cognate antitoxin is VapB37. The protein is Ribonuclease VapC37 of Mycobacterium tuberculosis (strain ATCC 25618 / H37Rv).